Consider the following 426-residue polypeptide: 3-phosphoshikimate 1-carboxyvinyltransferase (426 aa).

3-phosphoshikimate contacts are provided by Lys-22, Ser-23, and Arg-27. Phosphoenolpyruvate is bound at residue Lys-22. Positions 96 and 124 each coordinate phosphoenolpyruvate. Positions 170, 171, 172, 198, 314, 337, and 341 each coordinate 3-phosphoshikimate. A phosphoenolpyruvate-binding site is contributed by Gln-172. Residue Asp-314 is the Proton acceptor of the active site. Phosphoenolpyruvate contacts are provided by Arg-345, Arg-387, and Lys-412.

Belongs to the EPSP synthase family. In terms of assembly, monomer.

It localises to the cytoplasm. The enzyme catalyses 3-phosphoshikimate + phosphoenolpyruvate = 5-O-(1-carboxyvinyl)-3-phosphoshikimate + phosphate. The protein operates within metabolic intermediate biosynthesis; chorismate biosynthesis; chorismate from D-erythrose 4-phosphate and phosphoenolpyruvate: step 6/7. In terms of biological role, catalyzes the transfer of the enolpyruvyl moiety of phosphoenolpyruvate (PEP) to the 5-hydroxyl of shikimate-3-phosphate (S3P) to produce enolpyruvyl shikimate-3-phosphate and inorganic phosphate. This chain is 3-phosphoshikimate 1-carboxyvinyltransferase, found in Shewanella baltica (strain OS185).